Here is a 296-residue protein sequence, read N- to C-terminus: Acetylglutamate kinase (296 aa).

Residues 67–68, R89, and N194 contribute to the substrate site; that span reads GG.

Belongs to the acetylglutamate kinase family. ArgB subfamily.

It is found in the cytoplasm. The enzyme catalyses N-acetyl-L-glutamate + ATP = N-acetyl-L-glutamyl 5-phosphate + ADP. It participates in amino-acid biosynthesis; L-arginine biosynthesis; N(2)-acetyl-L-ornithine from L-glutamate: step 2/4. Catalyzes the ATP-dependent phosphorylation of N-acetyl-L-glutamate. This Brucella anthropi (strain ATCC 49188 / DSM 6882 / CCUG 24695 / JCM 21032 / LMG 3331 / NBRC 15819 / NCTC 12168 / Alc 37) (Ochrobactrum anthropi) protein is Acetylglutamate kinase.